Reading from the N-terminus, the 648-residue chain is Macrolide export ATP-binding/permease protein MacB (648 aa).

The 239-residue stretch at 5-243 (LELCNVSRSY…QGVDAAVVNT (239 aa)) folds into the ABC transporter domain. 41 to 48 (GVSGSGKS) serves as a coordination point for ATP. 5 helical membrane passes run 273-293 (LLTMLGIIIGIASVVSIVVVG), 417-437 (ANVVGEVVLAGNMPVIVIGVA), 523-543 (LFLTLVAVISLVVGGIGVMNI), 577-597 (VLVCLVGGALGISLSMFIAFM), and 611-631 (LTALASAFLCSTFTGILFGWL).

Belongs to the ABC transporter superfamily. Macrolide exporter (TC 3.A.1.122) family. In terms of assembly, homodimer. Part of the tripartite efflux system MacAB-TolC, which is composed of an inner membrane transporter, MacB, a periplasmic membrane fusion protein, MacA, and an outer membrane component, TolC. The complex forms a large protein conduit and can translocate molecules across both the inner and outer membranes. Interacts with MacA.

The protein localises to the cell inner membrane. Part of the tripartite efflux system MacAB-TolC. MacB is a non-canonical ABC transporter that contains transmembrane domains (TMD), which form a pore in the inner membrane, and an ATP-binding domain (NBD), which is responsible for energy generation. Confers resistance against macrolides. The polypeptide is Macrolide export ATP-binding/permease protein MacB (Salmonella typhimurium (strain LT2 / SGSC1412 / ATCC 700720)).